The following is a 366-amino-acid chain: Spermine synthase (366 aa).

N-acetylalanine is present on alanine 2. Serine 57 bears the Phosphoserine mark. One can recognise a PABS domain in the interval 122–362; sequence RYWPTADGRL…ELWVFYTVWK (241 aa). S-adenosyl 3-(methylsulfanyl)propylamine is bound at residue glutamine 148. Positions 177 and 201 each coordinate spermidine. S-adenosyl 3-(methylsulfanyl)propylamine is bound by residues glutamate 220 and 255–256; that span reads DC. Residue aspartate 276 is the Proton acceptor of the active site. 2 residues coordinate spermidine: tyrosine 351 and glutamate 353.

Belongs to the spermidine/spermine synthase family. In terms of assembly, homodimer. Dimerization is mediated through the N-terminal domain and seems to be required for activity as deletion of the N-terminal domain causes complete loss of activity.

The catalysed reaction is S-adenosyl 3-(methylsulfanyl)propylamine + spermidine = spermine + S-methyl-5'-thioadenosine + H(+). Its pathway is amine and polyamine biosynthesis; spermine biosynthesis; spermine from spermidine: step 1/1. Functionally, catalyzes the production of spermine from spermidine and decarboxylated S-adenosylmethionine (dcSAM). Required for normal viability, growth and fertility. This is Spermine synthase (Sms) from Mus musculus (Mouse).